The following is a 706-amino-acid chain: Transmembrane and coiled-coil domains protein 2 (706 aa).

Disordered stretches follow at residues 1–221 (MKRC…TTDT) and 251–280 (VALSLPSGPGHGDSDGPISLDVPDGAPDPQ). The residue at position 6 (S6) is a Phosphoserine. Residues 83–94 (GLKHLFHSRRRS) are compositionally biased toward basic residues. Low complexity predominate over residues 102 to 112 (SQEAQQQQQQQ). Residues 120 to 131 (PDEKERSPEMHR) are compositionally biased toward basic and acidic residues. R163 is subject to Omega-N-methylarginine. Residues 330–365 (KQVFEKKNQKSAQTIAQLHKKLEHYRRRLKEIEQNG) are a coiled coil. S435 bears the Phosphoserine mark. The disordered stretch occupies residues 440–459 (AHLKDPMEDGPPEEAARALS). Residues S461 and S467 each carry the phosphoserine modification. A disordered region spans residues 464-510 (LVSSPKYGSDDECSSASASSAGAGSNSGAGPGGALGSPRSNTLYGAP). Residues 477 to 487 (SSASASSAGAG) are compositionally biased toward low complexity. The span at 488–498 (SNSGAGPGGAL) shows a compositional bias: gly residues. At S500 the chain carries Phosphoserine. Positions 511–630 (GNLDTLLEEL…QQQQVVQLEG (120 aa)) form a coiled coil. 2 helical membrane-spanning segments follow: residues 646-666 (VILALMAVLLVFVSTIANFIT) and 679-699 (ALLLLVLFLLWKHWASLTYLL).

It belongs to the TEX28 family. May form homodimers and heterodimers with TMCC2 or TMCC3 via the coiled-coil domains. Interacts with ribosomal proteins RPL4 and RPS6. Interacts with APOE and proteolytic processed C-terminal fragment C99 of the amyloid precursor protein (APP C99).

The protein localises to the endoplasmic reticulum membrane. Its function is as follows. May be involved in the regulation of the proteolytic processing of the amyloid precursor protein (APP) possibly also implicating APOE. This Mus musculus (Mouse) protein is Transmembrane and coiled-coil domains protein 2.